A 348-amino-acid polypeptide reads, in one-letter code: S-adenosylmethionine:tRNA ribosyltransferase-isomerase (348 aa).

It belongs to the QueA family. In terms of assembly, monomer.

Its subcellular location is the cytoplasm. The catalysed reaction is 7-aminomethyl-7-carbaguanosine(34) in tRNA + S-adenosyl-L-methionine = epoxyqueuosine(34) in tRNA + adenine + L-methionine + 2 H(+). It functions in the pathway tRNA modification; tRNA-queuosine biosynthesis. Its function is as follows. Transfers and isomerizes the ribose moiety from AdoMet to the 7-aminomethyl group of 7-deazaguanine (preQ1-tRNA) to give epoxyqueuosine (oQ-tRNA). In Alteromonas mediterranea (strain DSM 17117 / CIP 110805 / LMG 28347 / Deep ecotype), this protein is S-adenosylmethionine:tRNA ribosyltransferase-isomerase.